We begin with the raw amino-acid sequence, 131 residues long: Small ribosomal subunit protein eS24 (131 aa).

The segment at 93 to 131 is disordered; that stretch reads RHGLYEKKKTSRKQRKERKNRMKKVRGTKKASVGAAGKK. Positions 101 to 121 are enriched in basic residues; the sequence is KTSRKQRKERKNRMKKVRGTK.

Belongs to the eukaryotic ribosomal protein eS24 family. In terms of assembly, component of the small ribosomal subunit. Part of the small subunit (SSU) processome, composed of more than 70 proteins and the RNA chaperone small nucleolar RNA (snoRNA) U3.

The protein resides in the cytoplasm. Its subcellular location is the nucleus. The protein localises to the nucleolus. Its function is as follows. Component of the small ribosomal subunit. The ribosome is a large ribonucleoprotein complex responsible for the synthesis of proteins in the cell. Required for processing of pre-rRNA and maturation of 40S ribosomal subunits. Part of the small subunit (SSU) processome, first precursor of the small eukaryotic ribosomal subunit. During the assembly of the SSU processome in the nucleolus, many ribosome biogenesis factors, an RNA chaperone and ribosomal proteins associate with the nascent pre-rRNA and work in concert to generate RNA folding, modifications, rearrangements and cleavage as well as targeted degradation of pre-ribosomal RNA by the RNA exosome. In Ictalurus punctatus (Channel catfish), this protein is Small ribosomal subunit protein eS24 (rps24).